The primary structure comprises 202 residues: dITP/XTP pyrophosphatase (202 aa).

7–12 (SRNEAK) serves as a coordination point for substrate. Asp-68 serves as the catalytic Proton acceptor. Asp-68 is a Mg(2+) binding site. Residues Ser-69, 156 to 159 (FGYD), Lys-179, and 184 to 185 (HR) each bind substrate.

The protein belongs to the HAM1 NTPase family. In terms of assembly, homodimer. The cofactor is Mg(2+).

It carries out the reaction XTP + H2O = XMP + diphosphate + H(+). The catalysed reaction is dITP + H2O = dIMP + diphosphate + H(+). The enzyme catalyses ITP + H2O = IMP + diphosphate + H(+). Functionally, pyrophosphatase that catalyzes the hydrolysis of nucleoside triphosphates to their monophosphate derivatives, with a high preference for the non-canonical purine nucleotides XTP (xanthosine triphosphate), dITP (deoxyinosine triphosphate) and ITP. Seems to function as a house-cleaning enzyme that removes non-canonical purine nucleotides from the nucleotide pool, thus preventing their incorporation into DNA/RNA and avoiding chromosomal lesions. The polypeptide is dITP/XTP pyrophosphatase (Frankia alni (strain DSM 45986 / CECT 9034 / ACN14a)).